Here is a 518-residue protein sequence, read N- to C-terminus: Cytochrome P450 monooxygenase pyr3 (518 aa).

Residues 26–46 (GVAIVLFLAPLALHLVSSYLF) form a helical membrane-spanning segment. A heme-binding site is contributed by Cys458.

It belongs to the cytochrome P450 family. Heme serves as cofactor.

Its subcellular location is the membrane. The protein operates within secondary metabolite biosynthesis; terpenoid biosynthesis. In terms of biological role, cytochrome P450 monooxygenase; part of the gene cluster that mediates the biosynthesis of pyripyropene A, a specific human acyl-coenzyme A:cholesterol acyltransferase 2 inhibitor. The first step of the pathway is the synthesis of nicotinyl-CoA from nicotinic acid by the nicotinic acid-CoA ligase pyr1. Nicotinyl-CoA is then a substrate of polyketide synthase pyr2 to produce 4-hydroxy-6-(3-pyridinyl)-2H-pyran-2-one (HPPO) which is further prenylated by the polyprenyl transferase pyr6 to yield farnesyl-HPPO. The next steps consist of an epoxidation of farnesyl-HPPO to epoxyfarnesyl-HPPO by FAD-dependent monooxygenase pyr5 and a cyclization of the terpenoid portion by the terpene cyclase pyr4 to yield deacetyl-pyripyropene E. The 2 cytochrome P450 monooxygenases pyr3 and pyr9, and the 2 acetyltransferases pyr7 and pyr8 are involved in the conversion of deacetyl-pyripyropene E into pyripyropene A through several cycles of oxidation and acetylation steps. Pyr7 acetylates deacetyl-pyripyropene E to pyripyropene E which is oxidized to 11-deacetyl-pyripyropene O by pyr3, which is in turn acetylated into pyripyropene O by pyr8. Pyripyropene O is then oxidized to deacetyl-pyripyropene A by pyr9. Deacetyl-pyripyropene A is finally acetylated to pyripyropene A by pyr8. In Aspergillus fumigatus (strain ATCC MYA-4609 / CBS 101355 / FGSC A1100 / Af293) (Neosartorya fumigata), this protein is Cytochrome P450 monooxygenase pyr3.